We begin with the raw amino-acid sequence, 441 residues long: Probable glycine dehydrogenase (decarboxylating) subunit 1 (441 aa).

The protein belongs to the GcvP family. N-terminal subunit subfamily. As to quaternary structure, the glycine cleavage system is composed of four proteins: P, T, L and H. In this organism, the P 'protein' is a heterodimer of two subunits.

The catalysed reaction is N(6)-[(R)-lipoyl]-L-lysyl-[glycine-cleavage complex H protein] + glycine + H(+) = N(6)-[(R)-S(8)-aminomethyldihydrolipoyl]-L-lysyl-[glycine-cleavage complex H protein] + CO2. Functionally, the glycine cleavage system catalyzes the degradation of glycine. The P protein binds the alpha-amino group of glycine through its pyridoxal phosphate cofactor; CO(2) is released and the remaining methylamine moiety is then transferred to the lipoamide cofactor of the H protein. In Halobacterium salinarum (strain ATCC 700922 / JCM 11081 / NRC-1) (Halobacterium halobium), this protein is Probable glycine dehydrogenase (decarboxylating) subunit 1.